The sequence spans 308 residues: Shikimate kinase 1, chloroplastic (308 aa).

A chloroplast-targeting transit peptide spans 1 to 62; that stretch reads MEAGVGLALQ…RGSKPVAPLR (62 aa). Residue 103-110 participates in ATP binding; the sequence is GMMGSGKS. Residue Ser110 participates in Mg(2+) binding. Positions 128, 153, and 175 each coordinate substrate. Arg214 contacts ATP.

Belongs to the shikimate kinase family. Mg(2+) serves as cofactor. As to expression, expressed in panicles.

It localises to the plastid. The protein localises to the chloroplast. It carries out the reaction shikimate + ATP = 3-phosphoshikimate + ADP + H(+). The protein operates within metabolic intermediate biosynthesis; chorismate biosynthesis; chorismate from D-erythrose 4-phosphate and phosphoenolpyruvate: step 5/7. Catalyzes the specific phosphorylation of the 3-hydroxyl group of shikimic acid using ATP as a cosubstrate. The chain is Shikimate kinase 1, chloroplastic (SK1) from Oryza sativa subsp. japonica (Rice).